The sequence spans 130 residues: Small ribosomal subunit protein uS8 (130 aa).

It belongs to the universal ribosomal protein uS8 family. Part of the 30S ribosomal subunit.

Its function is as follows. One of the primary rRNA binding proteins, it binds directly to 16S rRNA central domain where it helps coordinate assembly of the platform of the 30S subunit. The protein is Small ribosomal subunit protein uS8 of Pyrobaculum arsenaticum (strain DSM 13514 / JCM 11321 / PZ6).